The sequence spans 211 residues: Guanylate kinase (211 aa).

Residues 5 to 185 (GLLLILSSPS…AEEQLKMILS (181 aa)) enclose the Guanylate kinase-like domain. 12–19 (SPSGAGKS) provides a ligand contact to ATP.

Belongs to the guanylate kinase family.

It is found in the cytoplasm. It catalyses the reaction GMP + ATP = GDP + ADP. Essential for recycling GMP and indirectly, cGMP. The protein is Guanylate kinase of Cereibacter sphaeroides (strain ATCC 17023 / DSM 158 / JCM 6121 / CCUG 31486 / LMG 2827 / NBRC 12203 / NCIMB 8253 / ATH 2.4.1.) (Rhodobacter sphaeroides).